The sequence spans 308 residues: D-alanine--D-alanine ligase (308 aa).

The 201-residue stretch at 102 to 302 folds into the ATP-grasp domain; that stretch reads KTVAKSAGIP…FGALLSWMVE (201 aa). ATP is bound at residue 128-183; that stretch reads PMEPPYVVKPVAEGSSFGVVIVREGQSHPPQVLGSAEWGYGERVMVERYIPGRELT. 3 residues coordinate Mg(2+): Asp252, Glu269, and Asn271.

The protein belongs to the D-alanine--D-alanine ligase family. Mg(2+) is required as a cofactor. It depends on Mn(2+) as a cofactor.

Its subcellular location is the cytoplasm. The enzyme catalyses 2 D-alanine + ATP = D-alanyl-D-alanine + ADP + phosphate + H(+). It participates in cell wall biogenesis; peptidoglycan biosynthesis. Functionally, cell wall formation. The polypeptide is D-alanine--D-alanine ligase (Chelativorans sp. (strain BNC1)).